The primary structure comprises 1012 residues: Vacuolar membrane protease (1012 aa).

Over 1–60 (MRRSTDPRNLLVRRGPLLVDGESAISELDPGFFPTGDAPKMSSTTRRRFNLIAFTPGPVT) the chain is Cytoplasmic. Residues 61–81 (VISSLVYLALLIPLLLVHTIV) traverse the membrane as a helical segment. Residues 82–432 (PSAPKSNPKG…SFAVFRLHTL (351 aa)) are Vacuolar-facing. Residue Asn159 is glycosylated (N-linked (GlcNAc...) asparagine). The Zn(2+) site is built by His215 and Asp227. The active-site Proton acceptor is Glu261. The Zn(2+) site is built by Glu262, Glu287, and His360. The chain crosses the membrane as a helical span at residues 433-453 (FAISVTLLVVCPIVLFVIGII). Topologically, residues 454 to 487 (LSKMDKMYLFSIHETIPETKEKVSVRGLRGLFRY) are cytoplasmic. A helical membrane pass occupies residues 488-508 (PIILVVSSGILIGLSYLLAKV). Topologically, residues 509–518 (NPFIVHSSSY) are vacuolar. The helical transmembrane segment at 519-539 (AVWSMMLSSWIFMTWFLSCIA) threads the bilayer. Residues 540-550 (DFFRPSALHRA) are Cytoplasmic-facing. A helical transmembrane segment spans residues 551–571 (YTFTWQLLVMWVLLVISTVYV). Residues 572-575 (NQHD) lie on the Vacuolar side of the membrane. The chain crosses the membrane as a helical span at residues 576–596 (IAAGYFIVFYFAGTFLATLIS). Topologically, residues 597–710 (YLELFALPNK…WSASLPTWTW (114 aa)) are cytoplasmic. Over residues 614-629 (SQYPSRLGSNRSSRIL) the composition is skewed to polar residues. Residues 614 to 660 (SQYPSRLGSNRSSRILSPSADELPTGGDNNGEIYDGEEEPTESSSLL) form a disordered region. A helical membrane pass occupies residues 711-731 (VLQFLFVGPVVIMFIGQLGLF). Residues 732-743 (LTSAMNQVGADG) are Vacuolar-facing. The helical transmembrane segment at 744-764 (VGLLVVYIAIAVFSVLLLIPL) threads the bilayer. At 765-777 (SPFIHRFTYHVPT) the chain is on the cytoplasmic side. A helical membrane pass occupies residues 778 to 798 (FLLLVFIATLIYNLAAFPFSA). Topologically, residues 799–1012 (ENRLKIFFVQ…DGLVEVSRGF (214 aa)) are vacuolar. 2 N-linked (GlcNAc...) asparagine glycosylation sites follow: Asn842 and Asn878.

The protein belongs to the peptidase M28 family. Requires Zn(2+) as cofactor.

It localises to the vacuole membrane. May be involved in vacuolar sorting and osmoregulation. The chain is Vacuolar membrane protease from Coccidioides posadasii (strain RMSCC 757 / Silveira) (Valley fever fungus).